Consider the following 158-residue polypeptide: Transcription factor BTF3 homolog 4 (158 aa).

Residues 33 to 98 enclose the NAC-A/B domain; that stretch reads TADDKKLQSS…AEAKPITEML (66 aa). A disordered region spans residues 124–158; that stretch reads VLDSKAPKSEDIDEEDDDVPDLAENFDEASKNEAN. The segment covering 134–150 has biased composition (acidic residues); the sequence is DIDEEDDDVPDLAENFD.

Belongs to the NAC-beta family.

The protein is Transcription factor BTF3 homolog 4 (BTF3L4) of Gallus gallus (Chicken).